We begin with the raw amino-acid sequence, 51 residues long: uncharacterized protein (51 aa).

This is an uncharacterized protein from Rickettsia conorii (strain ATCC VR-613 / Malish 7).